We begin with the raw amino-acid sequence, 197 residues long: ATP-dependent Clp protease proteolytic subunit 1 (197 aa).

Catalysis depends on serine 88, which acts as the Nucleophile. Histidine 113 is a catalytic residue.

Belongs to the peptidase S14 family. As to quaternary structure, fourteen ClpP subunits assemble into 2 heptameric rings which stack back to back to give a disk-like structure with a central cavity, resembling the structure of eukaryotic proteasomes.

The protein localises to the cytoplasm. The catalysed reaction is Hydrolysis of proteins to small peptides in the presence of ATP and magnesium. alpha-casein is the usual test substrate. In the absence of ATP, only oligopeptides shorter than five residues are hydrolyzed (such as succinyl-Leu-Tyr-|-NHMec, and Leu-Tyr-Leu-|-Tyr-Trp, in which cleavage of the -Tyr-|-Leu- and -Tyr-|-Trp bonds also occurs).. Cleaves peptides in various proteins in a process that requires ATP hydrolysis. Has a chymotrypsin-like activity. Plays a major role in the degradation of misfolded proteins. In Leifsonia xyli subsp. xyli (strain CTCB07), this protein is ATP-dependent Clp protease proteolytic subunit 1.